Consider the following 444-residue polypeptide: Probable glycine dehydrogenase (decarboxylating) subunit 1 (444 aa).

Belongs to the GcvP family. N-terminal subunit subfamily. As to quaternary structure, the glycine cleavage system is composed of four proteins: P, T, L and H. In this organism, the P 'protein' is a heterodimer of two subunits.

It carries out the reaction N(6)-[(R)-lipoyl]-L-lysyl-[glycine-cleavage complex H protein] + glycine + H(+) = N(6)-[(R)-S(8)-aminomethyldihydrolipoyl]-L-lysyl-[glycine-cleavage complex H protein] + CO2. In terms of biological role, the glycine cleavage system catalyzes the degradation of glycine. The P protein binds the alpha-amino group of glycine through its pyridoxal phosphate cofactor; CO(2) is released and the remaining methylamine moiety is then transferred to the lipoamide cofactor of the H protein. This chain is Probable glycine dehydrogenase (decarboxylating) subunit 1, found in Carboxydothermus hydrogenoformans (strain ATCC BAA-161 / DSM 6008 / Z-2901).